A 239-amino-acid chain; its full sequence is tRNA (guanine-N(7)-)-methyltransferase (239 aa).

S-adenosyl-L-methionine is bound by residues glutamate 69, glutamate 94, aspartate 121, and aspartate 144. Aspartate 144 is a catalytic residue. Substrate is bound at residue lysine 148. Positions arginine 150 to arginine 155 are interaction with RNA. Residues aspartate 180 and threonine 217–glutamate 220 each bind substrate.

The protein belongs to the class I-like SAM-binding methyltransferase superfamily. TrmB family. In terms of assembly, monomer.

It catalyses the reaction guanosine(46) in tRNA + S-adenosyl-L-methionine = N(7)-methylguanosine(46) in tRNA + S-adenosyl-L-homocysteine. Its pathway is tRNA modification; N(7)-methylguanine-tRNA biosynthesis. Catalyzes the formation of N(7)-methylguanine at position 46 (m7G46) in tRNA. The polypeptide is tRNA (guanine-N(7)-)-methyltransferase (Yersinia pseudotuberculosis serotype O:1b (strain IP 31758)).